A 69-amino-acid polypeptide reads, in one-letter code: Antimicrobial peptide ISAMP (69 aa).

A signal peptide spans 1 to 23 (MRAVAIFIVTLLVLECVYFVMSE).

As to expression, expressed in the fat body, hemocytes and salivary glands of partially-fed female ticks. Not expressed in the midgut.

Its subcellular location is the secreted. In terms of biological role, has antimicrobial activity against B.cereus (MIC=5.8 ug/ml), B.subtilis (MIC=12.3 ug/ml), S.aureus (MIC=10.4 ug/ml), E.coli Edl 933 (MIC=3.2 ug/ml) and E.coli MG/655 (MIC=4.2 ug/ml). Non-hemolytic. This Ixodes scapularis (Black-legged tick) protein is Antimicrobial peptide ISAMP.